Reading from the N-terminus, the 399-residue chain is Phosphoglycerate kinase (399 aa).

Residues 21–23 (DFN), Arg-36, 59–62 (HLGR), Arg-120, and Arg-158 contribute to the substrate site. ATP-binding positions include Lys-209, Gly-297, Glu-328, and 355 to 358 (GGDS).

It belongs to the phosphoglycerate kinase family. As to quaternary structure, monomer.

The protein localises to the cytoplasm. It carries out the reaction (2R)-3-phosphoglycerate + ATP = (2R)-3-phospho-glyceroyl phosphate + ADP. The protein operates within carbohydrate degradation; glycolysis; pyruvate from D-glyceraldehyde 3-phosphate: step 2/5. The protein is Phosphoglycerate kinase of Streptococcus suis (strain 05ZYH33).